Here is a 445-residue protein sequence, read N- to C-terminus: Gamma-glutamyl phosphate reductase (445 aa).

Belongs to the gamma-glutamyl phosphate reductase family.

The protein resides in the cytoplasm. It catalyses the reaction L-glutamate 5-semialdehyde + phosphate + NADP(+) = L-glutamyl 5-phosphate + NADPH + H(+). It functions in the pathway amino-acid biosynthesis; L-proline biosynthesis; L-glutamate 5-semialdehyde from L-glutamate: step 2/2. Its function is as follows. Catalyzes the NADPH-dependent reduction of L-glutamate 5-phosphate into L-glutamate 5-semialdehyde and phosphate. The product spontaneously undergoes cyclization to form 1-pyrroline-5-carboxylate. The polypeptide is Gamma-glutamyl phosphate reductase (Saccharopolyspora erythraea (strain ATCC 11635 / DSM 40517 / JCM 4748 / NBRC 13426 / NCIMB 8594 / NRRL 2338)).